The following is an 81-amino-acid chain: Large ribosomal subunit protein bL27m (81 aa).

Over residues 1-11 (MATKKSGGSSR) the composition is skewed to polar residues. The disordered stretch occupies residues 1–20 (MATKKSGGSSRNGRDSKGRR).

The protein belongs to the bacterial ribosomal protein bL27 family.

It is found in the mitochondrion. The protein is Large ribosomal subunit protein bL27m (RPL27) of Reclinomonas americana.